Consider the following 207-residue polypeptide: Large ribosomal subunit protein uL4 (207 aa).

The tract at residues Phe56–Ser77 is disordered. The span at Lys63–Ser77 shows a compositional bias: basic residues.

It belongs to the universal ribosomal protein uL4 family. Part of the 50S ribosomal subunit.

In terms of biological role, one of the primary rRNA binding proteins, this protein initially binds near the 5'-end of the 23S rRNA. It is important during the early stages of 50S assembly. It makes multiple contacts with different domains of the 23S rRNA in the assembled 50S subunit and ribosome. Its function is as follows. Forms part of the polypeptide exit tunnel. This chain is Large ribosomal subunit protein uL4, found in Phytoplasma australiense.